Consider the following 386-residue polypeptide: DNase toxin Tse7 (386 aa).

In terms of assembly, interacts with Tsi7.

The enzyme catalyses Endonucleolytic cleavage to 5'-phosphodinucleotide and 5'-phosphooligonucleotide end-products.. Functionally, type VI secretion exported toxin that via to its DNase activity induces growth arrest and ultimately DNA degradation within target cell. The activity is initially neutralized by a cognate immunity protein Tsi7. The polypeptide is DNase toxin Tse7 (Pseudomonas aeruginosa (strain ATCC 15692 / DSM 22644 / CIP 104116 / JCM 14847 / LMG 12228 / 1C / PRS 101 / PAO1)).